The primary structure comprises 100 residues: Integration host factor subunit alpha (100 aa).

Belongs to the bacterial histone-like protein family. Heterodimer of an alpha and a beta chain.

Its function is as follows. This protein is one of the two subunits of integration host factor, a specific DNA-binding protein that functions in genetic recombination as well as in transcriptional and translational control. This Ruegeria sp. (strain TM1040) (Silicibacter sp.) protein is Integration host factor subunit alpha.